A 274-amino-acid polypeptide reads, in one-letter code: Diaminopimelate epimerase (274 aa).

N11, Q44, and N64 together coordinate substrate. C73 serves as the catalytic Proton donor. Residues 74–75 (GN), N157, N190, and 208–209 (ER) each bind substrate. C217 functions as the Proton acceptor in the catalytic mechanism. A substrate-binding site is contributed by 218-219 (GT).

It belongs to the diaminopimelate epimerase family. In terms of assembly, homodimer.

The protein resides in the cytoplasm. The enzyme catalyses (2S,6S)-2,6-diaminopimelate = meso-2,6-diaminopimelate. It participates in amino-acid biosynthesis; L-lysine biosynthesis via DAP pathway; DL-2,6-diaminopimelate from LL-2,6-diaminopimelate: step 1/1. In terms of biological role, catalyzes the stereoinversion of LL-2,6-diaminopimelate (L,L-DAP) to meso-diaminopimelate (meso-DAP), a precursor of L-lysine and an essential component of the bacterial peptidoglycan. This is Diaminopimelate epimerase from Blochmanniella pennsylvanica (strain BPEN).